The chain runs to 449 residues: Hyaluronidase-1 (449 aa).

Positions 1 to 23 (MYHLWIKCLAAWIFLKRCNGVHA) are cleaved as a signal peptide. Intrachain disulfides connect C47-C340 and C211-C227. N-linked (GlcNAc...) asparagine glycans are attached at residues N67, N103, and N111. Residue E135 is the Proton donor of the active site. A glycan (N-linked (GlcNAc...) asparagine) is linked at N153. N-linked (GlcNAc...) asparagine glycosylation occurs at N357. 3 disulfides stabilise this stretch: C365–C376, C370–C427, and C429–C438. N-linked (GlcNAc...) asparagine glycosylation occurs at N401. The EGF-like domain maps to 427-438 (CQCYQGWKGLYC).

This sequence belongs to the glycosyl hydrolase 56 family. In terms of assembly, monomer. As to expression, expressed by the venom gland.

It is found in the secreted. It carries out the reaction Random hydrolysis of (1-&gt;4)-linkages between N-acetyl-beta-D-glucosamine and D-glucuronate residues in hyaluronate.. Snake venom endo-hyaluronidase that degrades hyaluronan to smaller oligosaccharide fragments. In venom, it is not toxic by itself, but increases the diffusion of other venom proteins by degrading the extracellular matrix. In addition, it displays antiedematogenic activity. This is Hyaluronidase-1 from Bitis arietans (African puff adder).